Consider the following 589-residue polypeptide: Threonine--tRNA ligase (589 aa).

Residues 191-487 are catalytic; that stretch reads DHRKIGKNLG…LLEQTKGNFP (297 aa). Zn(2+)-binding residues include cysteine 284, histidine 335, and histidine 464.

It belongs to the class-II aminoacyl-tRNA synthetase family. As to quaternary structure, homodimer. It depends on Zn(2+) as a cofactor.

The protein resides in the cytoplasm. The catalysed reaction is tRNA(Thr) + L-threonine + ATP = L-threonyl-tRNA(Thr) + AMP + diphosphate + H(+). Catalyzes the attachment of threonine to tRNA(Thr) in a two-step reaction: L-threonine is first activated by ATP to form Thr-AMP and then transferred to the acceptor end of tRNA(Thr). Also edits incorrectly charged L-seryl-tRNA(Thr). The protein is Threonine--tRNA ligase of Mycoplasmopsis pulmonis (strain UAB CTIP) (Mycoplasma pulmonis).